The primary structure comprises 202 residues: GTP cyclohydrolase-2 (202 aa).

49 to 53 provides a ligand contact to GTP; that stretch reads RIHSE. 3 residues coordinate Zn(2+): cysteine 54, cysteine 65, and cysteine 67. Residues glutamine 70, 92-94, and threonine 114 each bind GTP; that span reads EGR. Residue aspartate 126 is the Proton acceptor of the active site. The Nucleophile role is filled by arginine 128. 2 residues coordinate GTP: threonine 149 and lysine 154.

Belongs to the GTP cyclohydrolase II family. Requires Zn(2+) as cofactor.

It catalyses the reaction GTP + 4 H2O = 2,5-diamino-6-hydroxy-4-(5-phosphoribosylamino)-pyrimidine + formate + 2 phosphate + 3 H(+). Its pathway is cofactor biosynthesis; riboflavin biosynthesis; 5-amino-6-(D-ribitylamino)uracil from GTP: step 1/4. In terms of biological role, catalyzes the conversion of GTP to 2,5-diamino-6-ribosylamino-4(3H)-pyrimidinone 5'-phosphate (DARP), formate and pyrophosphate. This chain is GTP cyclohydrolase-2, found in Shewanella frigidimarina (strain NCIMB 400).